Here is a 561-residue protein sequence, read N- to C-terminus: Chaperonin GroEL 1 (561 aa).

ATP contacts are provided by residues 29 to 32 (TMGP), 86 to 90 (DGTTT), Gly-413, and Asp-495.

It belongs to the chaperonin (HSP60) family. In terms of assembly, forms a cylinder of 14 subunits composed of two heptameric rings stacked back-to-back. Interacts with the co-chaperonin GroES.

Its subcellular location is the cytoplasm. It carries out the reaction ATP + H2O + a folded polypeptide = ADP + phosphate + an unfolded polypeptide.. Functionally, together with its co-chaperonin GroES, plays an essential role in assisting protein folding. The GroEL-GroES system forms a nano-cage that allows encapsulation of the non-native substrate proteins and provides a physical environment optimized to promote and accelerate protein folding. This is Chaperonin GroEL 1 from Trichodesmium erythraeum (strain IMS101).